An 84-amino-acid polypeptide reads, in one-letter code: Putative membrane protein insertion efficiency factor (84 aa).

The tract at residues 60 to 84 (WSQPGEDPVPDHFSLKRNDTRKQSH) is disordered. The span at 68–84 (VPDHFSLKRNDTRKQSH) shows a compositional bias: basic and acidic residues.

It belongs to the UPF0161 family.

Its subcellular location is the cell membrane. Its function is as follows. Could be involved in insertion of integral membrane proteins into the membrane. The sequence is that of Putative membrane protein insertion efficiency factor from Streptococcus gordonii (strain Challis / ATCC 35105 / BCRC 15272 / CH1 / DL1 / V288).